A 262-amino-acid polypeptide reads, in one-letter code: Phosphonates import ATP-binding protein PhnC (262 aa).

An ABC transporter domain is found at 5–253 (ICVEQLSKTF…RFDHLYRSIN (249 aa)). 37–44 (GPSGSGKS) serves as a coordination point for ATP.

It belongs to the ABC transporter superfamily. Phosphonates importer (TC 3.A.1.9.1) family. The complex is composed of two ATP-binding proteins (PhnC), two transmembrane proteins (PhnE) and a solute-binding protein (PhnD).

The protein resides in the cell inner membrane. It catalyses the reaction phosphonate(out) + ATP + H2O = phosphonate(in) + ADP + phosphate + H(+). Functionally, part of the ABC transporter complex PhnCDE involved in phosphonates import. Responsible for energy coupling to the transport system. The chain is Phosphonates import ATP-binding protein PhnC from Escherichia coli O157:H7.